The primary structure comprises 120 residues: MKRVMFHAKIHRATVTQADLHYVGSVTVDQDLLDAAGILPFEQVDIYDITNGARLTTYALPGERGSGVIGINGAAAHLVKPGDLVILVAYGVFDEEEARNLKPTVVLVDERNRILEVRKG.

The active-site Schiff-base intermediate with substrate; via pyruvic acid is serine 25. The residue at position 25 (serine 25) is a Pyruvic acid (Ser). Substrate is bound at residue threonine 57. Tyrosine 58 serves as the catalytic Proton donor. Position 73–75 (73–75) interacts with substrate; it reads GAA.

This sequence belongs to the PanD family. In terms of assembly, heterooctamer of four alpha and four beta subunits. Pyruvate is required as a cofactor. Is synthesized initially as an inactive proenzyme, which is activated by self-cleavage at a specific serine bond to produce a beta-subunit with a hydroxyl group at its C-terminus and an alpha-subunit with a pyruvoyl group at its N-terminus.

It is found in the cytoplasm. It carries out the reaction L-aspartate + H(+) = beta-alanine + CO2. It participates in cofactor biosynthesis; (R)-pantothenate biosynthesis; beta-alanine from L-aspartate: step 1/1. Its function is as follows. Catalyzes the pyruvoyl-dependent decarboxylation of aspartate to produce beta-alanine. The chain is Aspartate 1-decarboxylase from Thermus thermophilus (strain ATCC 27634 / DSM 579 / HB8).